The following is a 61-amino-acid chain: UPF0391 membrane protein Ajs_0703 (61 aa).

Transmembrane regions (helical) follow at residues 5–25 (AIIFAIISLIAGALGFTGVAA) and 33–53 (VLFVVFLVLAVLFVVLALLGI).

It belongs to the UPF0391 family.

The protein localises to the cell membrane. This Acidovorax sp. (strain JS42) protein is UPF0391 membrane protein Ajs_0703.